We begin with the raw amino-acid sequence, 66 residues long: Large ribosomal subunit protein uL29 (66 aa).

It belongs to the universal ribosomal protein uL29 family.

This is Large ribosomal subunit protein uL29 from Bacillus mycoides (strain KBAB4) (Bacillus weihenstephanensis).